The following is a 1440-amino-acid chain: Protein lin-15B (1440 aa).

4 disordered regions span residues 1 to 22, 48 to 67, 618 to 660, and 738 to 769; these read MQTLKTARLTSNPASIPTSSSS, ILRHRTLPAPTQETAHHLDA, PKEE…GRPI, and KDEPLDEDDFNHPSTDPVPNRTTASSQGPSSY. Low complexity predominate over residues 10 to 22; the sequence is TSNPASIPTSSSS. Residues 631–646 are compositionally biased toward low complexity; that stretch reads STSSPATSSPTIIRPR. A compositionally biased stretch (polar residues) spans 757–767; sequence NRTTASSQGPS. The THAP-type zinc finger occupies 1135–1209; sequence NPGVCCFCSK…LLKGMIPDAA (75 aa). 3 disordered regions span residues 1239–1281, 1298–1350, and 1395–1440; these read AIDL…EPSQ, RELS…GTSQ, and FADE…PSNE. Over residues 1254 to 1264 the composition is skewed to acidic residues; the sequence is TQEEEEEEEYE. A DNA-binding region (a.T hook 1) is located at residues 1317–1329; it reads PNPRGRPRKYPKN. Over residues 1396-1407 the composition is skewed to acidic residues; it reads ADEEEEEEEYEE. The segment at residues 1418-1430 is a DNA-binding region (a.T hook 2); it reads GRPVGRPRKDANK.

Its function is as follows. Synthetic multivulva (synMuv) class B protein. SynMuv proteins are required to repress the induction of vulval development. Acts redundantly with SynMuv class A protein lin-15A to negatively regulate vulval development. Regulates let-23 basal activity. This Caenorhabditis elegans protein is Protein lin-15B.